The sequence spans 390 residues: Olfactomedin-like protein 3A (390 aa).

Positions 1–17 (MRALQLLVLVLSGLVGA) are cleaved as a signal peptide. Positions 18–91 (QQQALMDYLE…RVDRVEREMD (74 aa)) form a coiled coil. The Olfactomedin-like domain occupies 130–386 (DCSDMISSIK…QILYKLQLKK (257 aa)). Cys-131 and Cys-313 are disulfide-bonded. Asn-169 is a glycosylation site (N-linked (GlcNAc...) asparagine).

It belongs to the OLFML3 family.

It localises to the secreted. Secreted scaffold protein that plays an essential role in dorsoventral patterning during early development. Stabilizes axial formation by restricting chordin (CHRD) activity on the dorsal side. Acts by facilitating the association between the tolloid proteases and their substrate chordin (CHRD), leading to enhance chordin (CHRD) degradation. The polypeptide is Olfactomedin-like protein 3A (olfml3a) (Danio rerio (Zebrafish)).